Consider the following 570-residue polypeptide: Pyruvate decarboxylase (570 aa).

A propeptide spans 1–2 (MV) (removed in mature form). The substrate site is built by aspartate 33 and histidine 120. Residues 394 to 476 (DSWFNGIQLK…MLINNRGYTI (83 aa)) are thiamine pyrophosphate binding. Residues aspartate 444, asparagine 471, and glycine 473 each coordinate Mg(2+). Glutamate 477 contributes to the substrate binding site.

It belongs to the TPP enzyme family. In terms of assembly, homomer. Requires a metal cation as cofactor. It depends on thiamine diphosphate as a cofactor.

The protein resides in the cytoplasm. The catalysed reaction is a 2-oxocarboxylate + H(+) = an aldehyde + CO2. Its pathway is carbohydrate metabolism; pyruvate metabolism. The protein is Pyruvate decarboxylase (cfp) of Neurospora crassa (strain ATCC 24698 / 74-OR23-1A / CBS 708.71 / DSM 1257 / FGSC 987).